A 155-amino-acid chain; its full sequence is Large ribosomal subunit protein uL13 (155 aa).

It belongs to the universal ribosomal protein uL13 family. As to quaternary structure, part of the 50S ribosomal subunit.

This protein is one of the early assembly proteins of the 50S ribosomal subunit, although it is not seen to bind rRNA by itself. It is important during the early stages of 50S assembly. In Rickettsia felis (strain ATCC VR-1525 / URRWXCal2) (Rickettsia azadi), this protein is Large ribosomal subunit protein uL13.